Reading from the N-terminus, the 101-residue chain is Iron-sulfur cluster assembly protein CyaY (101 aa).

The protein belongs to the frataxin family.

Functionally, involved in iron-sulfur (Fe-S) cluster assembly. May act as a regulator of Fe-S biogenesis. This is Iron-sulfur cluster assembly protein CyaY from Haemophilus influenzae (strain 86-028NP).